The chain runs to 253 residues: Triosephosphate isomerase (253 aa).

Residue 9–11 (NWK) participates in substrate binding. The Electrophile role is filled by His98. The Proton acceptor role is filled by Glu170. Substrate is bound by residues Gly176, Ser216, and 237-238 (GG).

This sequence belongs to the triosephosphate isomerase family. As to quaternary structure, homodimer.

It is found in the cytoplasm. The catalysed reaction is D-glyceraldehyde 3-phosphate = dihydroxyacetone phosphate. Its pathway is carbohydrate biosynthesis; gluconeogenesis. It functions in the pathway carbohydrate degradation; glycolysis; D-glyceraldehyde 3-phosphate from glycerone phosphate: step 1/1. Functionally, involved in the gluconeogenesis. Catalyzes stereospecifically the conversion of dihydroxyacetone phosphate (DHAP) to D-glyceraldehyde-3-phosphate (G3P). This is Triosephosphate isomerase from Amoebophilus asiaticus (strain 5a2).